Consider the following 23-residue polypeptide: Phallacidin proprotein (23 aa).

Residue Pro-1 is a propeptide. Residues 2–8 constitute a cross-link (cyclopeptide (Ala-Pro)); it reads AWLVDCP. A cross-link (2'-cysteinyl-6'-hydroxytryptophan sulfoxide (Trp-Cys)) is located at residues 3–7; sequence WLVDC. A propeptide spanning residues 9 to 23 is cleaved from the precursor; the sequence is CVGDDVNFILTRGQK.

Belongs to the MSDIN fungal toxin family. Post-translationally, processed by the macrocyclase-peptidase enzyme POPB to yield a toxic cyclic heptapeptide. POPB first removes 10 residues from the N-terminus. Conformational trapping of the remaining peptide forces the enzyme to release this intermediate rather than proceed to macrocyclization. The enzyme rebinds the remaining peptide in a different conformation and catalyzes macrocyclization of the N-terminal 7 residues.

Major toxin that belongs to the bicyclic heptapeptides called phallotoxins. Although structurally related to amatoxins, phallotoxins have a different mode of action, which is the stabilization of F-actin. Phallotoxins are poisonous when administered parenterally, but not orally because of poor absorption. The sequence is that of Phallacidin proprotein from Amanita fuligineoides.